Consider the following 329-residue polypeptide: Ribosomal RNA small subunit methyltransferase C (329 aa).

Belongs to the methyltransferase superfamily. RsmC family. Monomer.

Its subcellular location is the cytoplasm. It catalyses the reaction guanosine(1207) in 16S rRNA + S-adenosyl-L-methionine = N(2)-methylguanosine(1207) in 16S rRNA + S-adenosyl-L-homocysteine + H(+). Specifically methylates the guanine in position 1207 of 16S rRNA in the 30S particle. The protein is Ribosomal RNA small subunit methyltransferase C of Haemophilus ducreyi (strain 35000HP / ATCC 700724).